We begin with the raw amino-acid sequence, 194 residues long: Fe/S biogenesis protein NfuA (194 aa).

[4Fe-4S] cluster contacts are provided by Cys-152 and Cys-155.

This sequence belongs to the NfuA family. Homodimer. [4Fe-4S] cluster is required as a cofactor.

Functionally, involved in iron-sulfur cluster biogenesis. Binds a 4Fe-4S cluster, can transfer this cluster to apoproteins, and thereby intervenes in the maturation of Fe/S proteins. Could also act as a scaffold/chaperone for damaged Fe/S proteins. This is Fe/S biogenesis protein NfuA from Stutzerimonas stutzeri (strain A1501) (Pseudomonas stutzeri).